The primary structure comprises 130 residues: 3-aminoacrylate deaminase RutC (130 aa).

Belongs to the RutC family.

The enzyme catalyses (Z)-3-aminoacrylate + H2O + H(+) = 3-oxopropanoate + NH4(+). Involved in pyrimidine catabolism. Catalyzes the deamination of 3-aminoacrylate to malonic semialdehyde, a reaction that can also occur spontaneously. RutC may facilitate the reaction and modulate the metabolic fitness, rather than catalyzing essential functions. The chain is 3-aminoacrylate deaminase RutC from Haliangium ochraceum (strain DSM 14365 / JCM 11303 / SMP-2).